The primary structure comprises 747 residues: Sex-specific storage-protein 1 (747 aa).

The first 15 residues, 1-15 (MRVLVLLACLAAASA), serve as a signal peptide directing secretion. 2 N-linked (GlcNAc...) asparagine glycosylation sites follow: Asn494 and Asn706.

This sequence belongs to the hemocyanin family. As to expression, fat body.

It is found in the secreted. The protein resides in the extracellular space. In terms of biological role, larval storage protein (LSP) which may serve as a store of amino acids for synthesis of adult proteins. This Bombyx mori (Silk moth) protein is Sex-specific storage-protein 1 (SP1).